We begin with the raw amino-acid sequence, 474 residues long: Glutamate--tRNA ligase (474 aa).

Positions 9–19 (PSPTGYLHVGG) match the 'HIGH' region motif. Positions 240 to 244 (KLSKR) match the 'KMSKS' region motif. Lys243 provides a ligand contact to ATP.

The protein belongs to the class-I aminoacyl-tRNA synthetase family. Glutamate--tRNA ligase type 1 subfamily. Monomer.

Its subcellular location is the cytoplasm. The enzyme catalyses tRNA(Glu) + L-glutamate + ATP = L-glutamyl-tRNA(Glu) + AMP + diphosphate. Functionally, catalyzes the attachment of glutamate to tRNA(Glu) in a two-step reaction: glutamate is first activated by ATP to form Glu-AMP and then transferred to the acceptor end of tRNA(Glu). This is Glutamate--tRNA ligase from Aliivibrio salmonicida (strain LFI1238) (Vibrio salmonicida (strain LFI1238)).